A 212-amino-acid polypeptide reads, in one-letter code: UPF0502 protein ECA2523 (212 aa).

The protein belongs to the UPF0502 family.

The protein is UPF0502 protein ECA2523 of Pectobacterium atrosepticum (strain SCRI 1043 / ATCC BAA-672) (Erwinia carotovora subsp. atroseptica).